Consider the following 238-residue polypeptide: Aspirochlorine biosynthesis protein N (238 aa).

This sequence belongs to the asaB hydroxylase/desaturase family.

It functions in the pathway mycotoxin biosynthesis. Part of the gene cluster that mediates the biosynthesis of aspirochlorine (or antibiotic A30641), an unusual halogenated spiro compound with distinctive antifungal properties due to selective inhibition of protein biosynthesis, and which is also active against bacteria, viruses, and murine tumor cells. The non-ribosomal peptide synthetase (NRPS) aclP is responsible the formation of the diketopiperazine (DKP) core from the condensation of 2 phenylalanine residues. One Phe residue is tailored into chlorotyrosine by hydroxylation and chlorination, whereas the second Phe undergoes an unprecedented C-C bond cleavage to be converted into glycine. After formation of the DKP, sulfur is incorporated into the DKP by conjugation with glutathione by aclG, followed by its stepwise degradation to the thiol by aclI, aclJ and aclK, and the dithiol oxidation by aclT. In addition, oxygenases (aclB, aclC, aclL and aclO) and O-methyltransferases (aclM and aclU) act as tailoring enzymes to produce the intermediate dechloroaspirochlorine. Ultimately, chlorination of dechloroaspirochlorine by the halogenase aclH is the last step in the aspirochlorine pathway. This is Aspirochlorine biosynthesis protein N from Aspergillus oryzae (strain ATCC 42149 / RIB 40) (Yellow koji mold).